A 170-amino-acid chain; its full sequence is Lipoprotein signal peptidase (170 aa).

3 consecutive transmembrane segments (helical) span residues 12–32, 67–87, and 93–113; these read WYWV…WVLA, WQRW…TVWL, and GLWR…GNLI. Residues aspartate 123 and aspartate 141 contribute to the active site. The chain crosses the membrane as a helical span at residues 133–153; the sequence is HFPAFNIADSAICVGAGLIIL.

It belongs to the peptidase A8 family.

The protein localises to the cell inner membrane. The catalysed reaction is Release of signal peptides from bacterial membrane prolipoproteins. Hydrolyzes -Xaa-Yaa-Zaa-|-(S,diacylglyceryl)Cys-, in which Xaa is hydrophobic (preferably Leu), and Yaa (Ala or Ser) and Zaa (Gly or Ala) have small, neutral side chains.. It participates in protein modification; lipoprotein biosynthesis (signal peptide cleavage). Its function is as follows. This protein specifically catalyzes the removal of signal peptides from prolipoproteins. The protein is Lipoprotein signal peptidase of Shewanella loihica (strain ATCC BAA-1088 / PV-4).